The chain runs to 209 residues: V-type ATP synthase subunit D 2 (209 aa).

This sequence belongs to the V-ATPase D subunit family.

In terms of biological role, produces ATP from ADP in the presence of a proton gradient across the membrane. The protein is V-type ATP synthase subunit D 2 (atpD2) of Treponema pallidum (strain Nichols).